Here is a 371-residue protein sequence, read N- to C-terminus: Barbiturase 1 (371 aa).

The RU A stretch occupies residues 1–103; sequence MPDAIEVRKV…TIFATVPPED (103 aa). Substrate is bound by residues R53 and 82–83; that span reads SG. The segment at 115 to 250 is RU B; sequence RLTVGFAMSE…AQVVVVGNAP (136 aa). The active site involves K165. Residues N197 and 233-234 each bind substrate; that span reads SS. The active-site Nucleophile is S233. An RU C region spans residues 256-371; that stretch reads YRIGHSVMKD…GPVAAIVDLG (116 aa). E304 contributes to the Mg(2+) binding site. Residues K331 and 350–351 each bind substrate; that span reads SV. Mg(2+) contacts are provided by A353, Q356, G357, P358, and G361.

This sequence belongs to the cyclic amide hydrolase (CyAH) family. In terms of assembly, homotetramer.

It catalyses the reaction barbiturate + H2O = 3-oxo-3-ureidopropanoate. The protein operates within pyrimidine metabolism; uracil degradation via oxidative pathway; malonate and urea from uracil: step 2/3. Its activity is regulated as follows. Inhibited by cyanuric acid. In terms of biological role, responsible for the hydrolysis of barbituric acid (2,4,6-trihydroxy-1,3-pyrimidine), an intermediate in the oxidative catabolism of pyrimidines. Catalyzes the hydrolytic opening of the pyrimidine ring of barbituric acid to yield ureidomalonic acid. The polypeptide is Barbiturase 1 (Nocardioides sp. (strain ATCC BAA-499 / JS614)).